A 619-amino-acid polypeptide reads, in one-letter code: Very-long-chain aldehyde decarbonylase GL1-4 (619 aa).

5 helical membrane passes run 45–65 (IAFS…QIWI), 94–114 (GWDD…LAMP), 126–146 (GAVV…YWFH), 178–198 (FAEH…TIYL), and 325–345 (AWYM…AWIY). The Fatty acid hydroxylase domain occupies 138 to 272 (VEFLYYWFHR…MPFYDYIYNT (135 aa)).

Belongs to the sterol desaturase family. In terms of assembly, homodimer. As to expression, expressed ubiquitously at low levels, with higher accumulation in developing panicles, shoots and flag leaves.

It is found in the endoplasmic reticulum membrane. It carries out the reaction a long-chain fatty aldehyde + 2 NADPH + O2 + H(+) = a long-chain alkane + formate + 2 NADP(+) + H2O. In terms of biological role, aldehyde decarbonylase involved in the conversion of aldehydes to alkanes. Core component of a very-long-chain alkane synthesis complex. The protein is Very-long-chain aldehyde decarbonylase GL1-4 of Oryza sativa subsp. japonica (Rice).